A 108-amino-acid polypeptide reads, in one-letter code: Ig kappa chain V region K-25 (108 aa).

The segment at 1 to 23 (AVELTQTPASVEAAVGGTVTIKC) is framework-1. The segment at 24–34 (QASQBIYSYLS) is complementarity-determining-1. Positions 35–49 (WYQQKPGQPPKLLIY) are framework-2. The complementarity-determining-2 stretch occupies residues 50 to 56 (KASTLAS). A framework-3 region spans residues 57–88 (GVSSRFKGSGSGTEFTLTISDLZCADAATYYC). The segment at 89-97 (QTYSYSSTY) is complementarity-determining-3. Residues 98 to 107 (FGGGTEVVVK) form a framework-4 region.

In Oryctolagus cuniculus (Rabbit), this protein is Ig kappa chain V region K-25.